Consider the following 655-residue polypeptide: p-hydroxybenzoic acid efflux pump subunit AaeB (655 aa).

A run of 11 helical transmembrane segments spans residues 13–33, 38–58, 69–89, 93–113, 121–141, 152–172, 370–390, 407–427, 431–451, 459–479, and 482–502; these read FAVKLATAIVLALFVGFHFQL, WAVLTAAIVAAGPAFAAGGEP, LRIIGTFIGCIAGLVIIIAMI, LLMILVCCIWAGFCTWISSLV, WGLAGYTALIIVITIQPEPLL, EIVIGIVCAIMADLLFSPRSI, LFWLWTGWTSGSGAMVMIAVV, FIYGTLAALPLGLLYFLVIIP, QSMLLLCISLAVLGFFLGIEV, MGALASTINIIVLDNPMTFHF, and FLDSALGQIVGCVLAFTVILL.

Belongs to the aromatic acid exporter ArAE (TC 2.A.85) family.

The protein resides in the cell inner membrane. Forms an efflux pump with AaeA. Could function as a metabolic relief valve, allowing to eliminate certain compounds when they accumulate to high levels in the cell. The polypeptide is p-hydroxybenzoic acid efflux pump subunit AaeB (Shigella boydii serotype 18 (strain CDC 3083-94 / BS512)).